Consider the following 210-residue polypeptide: Imidazoleglycerol-phosphate dehydratase (210 aa).

The tract at residues 185–210 (PRRGGSIPSSKGVLEQAGDNNTEKSK) is disordered.

It belongs to the imidazoleglycerol-phosphate dehydratase family.

It is found in the cytoplasm. The catalysed reaction is D-erythro-1-(imidazol-4-yl)glycerol 3-phosphate = 3-(imidazol-4-yl)-2-oxopropyl phosphate + H2O. It participates in amino-acid biosynthesis; L-histidine biosynthesis; L-histidine from 5-phospho-alpha-D-ribose 1-diphosphate: step 6/9. In Prochlorococcus marinus (strain SARG / CCMP1375 / SS120), this protein is Imidazoleglycerol-phosphate dehydratase.